The primary structure comprises 570 residues: Peptidyl-prolyl cis-trans isomerase-like 2 (570 aa).

Residues 37 to 110 (KRLPFNFCSL…GDYVDPVTYK (74 aa)) enclose the U-box domain. Disordered regions lie at residues 215–253 (RSER…KPTP), 428–449 (STTL…PTPD), and 469–570 (KKAE…SSWD). Positions 234–248 (STTTSTQSKTASFQS) are enriched in low complexity. The region spanning 298–457 (QKGYARISTT…PDIRITDVTI (160 aa)) is the PPIase cyclophilin-type domain. Residues 428 to 446 (STTLNNLETHPVNSSTNRP) are compositionally biased toward polar residues. A compositionally biased stretch (basic and acidic residues) spans 469–483 (KKAEEASGKNKKVDP). Composition is skewed to acidic residues over residues 484–497 (TEED…DDDQ) and 535–550 (QEED…EPEP).

The protein belongs to the cyclophilin-type PPIase family. PPIL2 subfamily.

It localises to the nucleus. It carries out the reaction [protein]-peptidylproline (omega=180) = [protein]-peptidylproline (omega=0). It catalyses the reaction S-ubiquitinyl-[E2 ubiquitin-conjugating enzyme]-L-cysteine + [acceptor protein]-L-lysine = [E2 ubiquitin-conjugating enzyme]-L-cysteine + N(6)-ubiquitinyl-[acceptor protein]-L-lysine.. Its function is as follows. May catalyze the cis-trans isomerization of proline imidic peptide bonds in oligopeptides thereby assisting the folding of proteins. May also function as a chaperone, playing a role in intracellular transport of proteins. May also have a protein ubiquitin ligase activity acting as an E3 ubiquitin protein ligase or as a ubiquitin-ubiquitin ligase promoting elongation of ubiquitin chains on proteins. The protein is Peptidyl-prolyl cis-trans isomerase-like 2 (cyp8) of Aspergillus oryzae (strain ATCC 42149 / RIB 40) (Yellow koji mold).